The chain runs to 357 residues: N-acetyl-gamma-glutamyl-phosphate reductase (357 aa).

C151 is an active-site residue.

It belongs to the NAGSA dehydrogenase family. Type 1 subfamily.

It localises to the cytoplasm. It carries out the reaction N-acetyl-L-glutamate 5-semialdehyde + phosphate + NADP(+) = N-acetyl-L-glutamyl 5-phosphate + NADPH + H(+). It participates in amino-acid biosynthesis; L-arginine biosynthesis; N(2)-acetyl-L-ornithine from L-glutamate: step 3/4. Catalyzes the NADPH-dependent reduction of N-acetyl-5-glutamyl phosphate to yield N-acetyl-L-glutamate 5-semialdehyde. The chain is N-acetyl-gamma-glutamyl-phosphate reductase from Corynebacterium kroppenstedtii (strain DSM 44385 / JCM 11950 / CIP 105744 / CCUG 35717).